The sequence spans 394 residues: 4-hydroxybenzoate 3-monooxygenase (NAD(P)H) (394 aa).

Residues Glu32, 42-47 (TIRAGV), and Gln102 contribute to the FAD site. Residues Tyr203, 214–216 (STR), and Tyr224 each bind substrate. Residue Asp288 participates in FAD binding. Residue Pro295 coordinates substrate. 301–302 (LN) is a binding site for FAD.

Belongs to the aromatic-ring hydroxylase family. FAD is required as a cofactor.

The enzyme catalyses 4-hydroxybenzoate + NADH + O2 + H(+) = 3,4-dihydroxybenzoate + NAD(+) + H2O. The catalysed reaction is 4-hydroxybenzoate + NADPH + O2 + H(+) = 3,4-dihydroxybenzoate + NADP(+) + H2O. Functionally, involved in the degradation of 4-hydroxybenzoate (4HB) via the protocatechuate (PCA) 2,3-cleavage pathway. Catalyzes the conversion of 4HB into 2-hydroxypenta-2,4-dienoate (HPD). It is highly specific for 4-hydroxybenzoate, and is able to utilize both NADH and NADPH as electron donors at approximately equal rates. The sequence is that of 4-hydroxybenzoate 3-monooxygenase (NAD(P)H) (praI) from Paenibacillus sp.